Reading from the N-terminus, the 239-residue chain is DNA repair protein RecO (239 aa).

The protein belongs to the RecO family.

In terms of biological role, involved in DNA repair and RecF pathway recombination. The protein is DNA repair protein RecO of Tolumonas auensis (strain DSM 9187 / NBRC 110442 / TA 4).